A 347-amino-acid polypeptide reads, in one-letter code: uncharacterized protein (347 aa).

2 coiled-coil regions span residues 148–201 (DQQS…EKDG) and 261–298 (LENL…DTFS). The disordered stretch occupies residues 151–203 (SISNLRKEEKEKQKENENENENENENENENEKENQELDKKVNQTNDNEKDGDE). Positions 155–167 (LRKEEKEKQKENE) are enriched in basic and acidic residues. The segment covering 168-178 (NENENENENEN) has biased composition (acidic residues). The segment covering 179-191 (ENEKENQELDKKV) has biased composition (basic and acidic residues).

This is an uncharacterized protein from Dictyostelium discoideum (Social amoeba).